The following is a 101-amino-acid chain: MGTPELKIILEFSAGAELLFGNIKRRELVLDGNQKWTIANLLKWMHANILTERPELFLQGDTVRPGILVLINDTDWELLGELDYELQPNDNVLFISTLHGG.

G101 is subject to 1-thioglycine. A Glycyl lysine isopeptide (Gly-Lys) (interchain with K-? in acceptor proteins) cross-link involves residue G101.

It belongs to the URM1 family. As to quaternary structure, interacts with cer. In terms of processing, C-terminal thiocarboxylation occurs in 2 steps, it is first acyl-adenylated (-COAMP) via the hesA/moeB/thiF part of the MOCS3 homolog, then thiocarboxylated (-COSH) via the rhodanese domain of the MOCS3 homolog.

Its subcellular location is the cytoplasm. Its pathway is tRNA modification; 5-methoxycarbonylmethyl-2-thiouridine-tRNA biosynthesis. In terms of biological role, acts as a sulfur carrier required for 2-thiolation of mcm(5)S(2)U at tRNA wobble positions of cytosolic tRNA(Lys), tRNA(Glu) and tRNA(Gln). Serves as sulfur donor in tRNA 2-thiolation reaction by being thiocarboxylated (-COSH) at its C-terminus by MOCS3. The sulfur is then transferred to tRNA to form 2-thiolation of mcm(5)S(2)U. Also acts as a ubiquitin-like protein (UBL) that is covalently conjugated via an isopeptide bond to lysine residues of target proteins such as Prx2/Jafrac1, Ciao1, Eip71CD and GILT1. The thiocarboxylated form serves as substrate for conjugation and oxidative stress specifically induces the formation of UBL-protein conjugates. This chain is Ubiquitin-related modifier 1 homolog, found in Drosophila yakuba (Fruit fly).